The sequence spans 382 residues: Cell division protein DivIB (382 aa).

Topologically, residues 1–103 (MAKDKEKQSD…SATQIAFQKS (103 aa)) are cytoplasmic. Composition is skewed to basic and acidic residues over residues 36–49 (EKKLKEKLLSDKKA) and 60–70 (VELKTDEKTDS). The interval 36-92 (EKKLKEKLLSDKKAQQQAQNASEAVELKTDEKTDSQEIESETTSKPKKTKKVRQPKE) is disordered. The helical transmembrane segment at 104-124 (LPVLLGALLLMAVSIFMITPY) threads the bilayer. In terms of domain architecture, POTRA spans 125–196 (SKKKEFSVRG…NHFLFNVIEF (72 aa)). Over 125-382 (SKKKEFSVRG…PETVLEQAHG (258 aa)) the chain is Extracellular. The segment at 322–382 (QEIENQPEVP…PETVLEQAHG (61 aa)) is disordered. Residues 338-352 (AADKEGDKPGEHQEQ) show a composition bias toward basic and acidic residues.

The protein belongs to the FtsQ/DivIB family. DivIB subfamily.

Its subcellular location is the cell membrane. Its function is as follows. Cell division protein that may be involved in stabilizing or promoting the assembly of the division complex. The chain is Cell division protein DivIB from Streptococcus pyogenes serotype M2 (strain MGAS10270).